The sequence spans 542 residues: Aspartate kinase FUB3 (542 aa).

2 ACT domains span residues 404-472 and 478-542; these read ILSN…VLPD and LVGA…KSAI.

It belongs to the aspartokinase family.

The catalysed reaction is L-aspartate + ATP = 4-phospho-L-aspartate + ADP. The protein operates within mycotoxin biosynthesis. Aspartate kinase; part of the gene cluster that mediates the biosynthesis of fusaric acid, a mycotoxin with low to moderate toxicity to animals and humans, but with high phytotoxic properties. L-aspartate is suggested as fusaric acid amino acid precursor that is activated and further processed to O-acetyl-L-homoserine by cluster enzymes aspartate kinase FUB3 and homoserine O-acetyltransferase FUB5, as well as enzymes of the primary metabolism. The polyketide synthase (PKS) FUB1 generates the triketide trans-2-hexenal which is presumptively released by the hydrolase FUB4 and linked to the NRPS-bound amino acid precursor by NAD(P)-dependent dehydrogenase FUB6. FUB1, FUB4, and the non-canonical NRPS Fub8 may form an enzyme complex. Further processing of the NRPS-bound intermediate might be carried out by FUB6 and the sulfhydrylase FUB7, enabling a spontaneous electrocyclization to close the carbon backbone of fusaric acid. Dihydrofusaric acid is likely to be released via reduction by the thioester reductase (TR) domain of FUB8 whereupon the final oxidation to fusaric acid may (also) be performed by the FMN-dependent dehydrogenase FUB9. The polypeptide is Aspartate kinase FUB3 (Fusarium oxysporum f. sp. lycopersici (strain 4287 / CBS 123668 / FGSC 9935 / NRRL 34936) (Fusarium vascular wilt of tomato)).